The primary structure comprises 419 residues: MAPK/MAK/MRK overlapping kinase (419 aa).

In terms of domain architecture, Protein kinase spans tyrosine 4–phenylalanine 285. ATP-binding positions include isoleucine 10–valine 18 and lysine 33. The Proton acceptor role is filled by aspartate 128. Disordered regions lie at residues phenylalanine 285 to alanine 344 and proline 390 to arginine 419. Basic and acidic residues-rich tracts occupy residues lysine 322–proline 338 and lysine 393–lysine 402.

This sequence belongs to the protein kinase superfamily. CMGC Ser/Thr protein kinase family. CDC2/CDKX subfamily. Requires Mg(2+) as cofactor. Post-translationally, autophosphorylated. In terms of tissue distribution, expressed in heart, brain, lung, kidney, and pancreas, and at very low levels in placenta, liver and skeletal muscle. Detected in retina.

It localises to the cytoplasm. Its subcellular location is the cell projection. The protein localises to the cilium. It is found in the nucleus. The enzyme catalyses L-seryl-[protein] + ATP = O-phospho-L-seryl-[protein] + ADP + H(+). It carries out the reaction L-threonyl-[protein] + ATP = O-phospho-L-threonyl-[protein] + ADP + H(+). Phosphorylation appears to increase the enzymatic activity. Its function is as follows. Able to phosphorylate several exogenous substrates and to undergo autophosphorylation. Negatively regulates cilium length in a cAMP and mTORC1 signaling-dependent manner. This chain is MAPK/MAK/MRK overlapping kinase (MOK), found in Homo sapiens (Human).